A 166-amino-acid chain; its full sequence is Urease accessory protein UreE (166 aa).

A disordered region spans residues 133 to 154; the sequence is QPEHGAYGGGHHHSRHGDEDFN.

Belongs to the UreE family.

Its subcellular location is the cytoplasm. Involved in urease metallocenter assembly. Binds nickel. Probably functions as a nickel donor during metallocenter assembly. In Pseudomonas fluorescens (strain SBW25), this protein is Urease accessory protein UreE.